The sequence spans 562 residues: Formate--tetrahydrofolate ligase (562 aa).

71–78 (TPAGEGKS) contacts ATP.

This sequence belongs to the formate--tetrahydrofolate ligase family.

The enzyme catalyses (6S)-5,6,7,8-tetrahydrofolate + formate + ATP = (6R)-10-formyltetrahydrofolate + ADP + phosphate. It functions in the pathway one-carbon metabolism; tetrahydrofolate interconversion. The polypeptide is Formate--tetrahydrofolate ligase (Bacillus cereus (strain G9842)).